A 208-amino-acid polypeptide reads, in one-letter code: Putative ADP-ribose pyrophosphatase YjhB (208 aa).

In terms of domain architecture, Nudix hydrolase spans 69-195 (TPKADVRGAV…NTPSQLSMLF (127 aa)). The Nudix box motif lies at 100–121 (GFCEIGLSPAENVVKEIKEESG). 2 residues coordinate Mg(2+): Glu115 and Glu119.

The protein belongs to the Nudix hydrolase family. The cofactor is Mg(2+). Requires Mn(2+) as cofactor.

Probably mediates the hydrolysis of some nucleoside diphosphate derivatives. The chain is Putative ADP-ribose pyrophosphatase YjhB (yjhB) from Bacillus subtilis (strain 168).